Here is a 364-residue protein sequence, read N- to C-terminus: Chorismate synthase (364 aa).

Positions 48 and 54 each coordinate NADP(+). FMN is bound by residues 129–131, 243–244, Gly288, 303–307, and Arg329; these read RSS, NA, and KPTSS.

It belongs to the chorismate synthase family. As to quaternary structure, homotetramer. It depends on FMNH2 as a cofactor.

The catalysed reaction is 5-O-(1-carboxyvinyl)-3-phosphoshikimate = chorismate + phosphate. The protein operates within metabolic intermediate biosynthesis; chorismate biosynthesis; chorismate from D-erythrose 4-phosphate and phosphoenolpyruvate: step 7/7. Its function is as follows. Catalyzes the anti-1,4-elimination of the C-3 phosphate and the C-6 proR hydrogen from 5-enolpyruvylshikimate-3-phosphate (EPSP) to yield chorismate, which is the branch point compound that serves as the starting substrate for the three terminal pathways of aromatic amino acid biosynthesis. This reaction introduces a second double bond into the aromatic ring system. The chain is Chorismate synthase from Chelativorans sp. (strain BNC1).